The following is a 1071-amino-acid chain: DNA-directed RNA polymerase subunit beta (1071 aa).

Belongs to the RNA polymerase beta chain family. In plastids the minimal PEP RNA polymerase catalytic core is composed of four subunits: alpha, beta, beta', and beta''. When a (nuclear-encoded) sigma factor is associated with the core the holoenzyme is formed, which can initiate transcription.

The protein resides in the plastid. It is found in the chloroplast. It carries out the reaction RNA(n) + a ribonucleoside 5'-triphosphate = RNA(n+1) + diphosphate. Functionally, DNA-dependent RNA polymerase catalyzes the transcription of DNA into RNA using the four ribonucleoside triphosphates as substrates. The protein is DNA-directed RNA polymerase subunit beta of Adiantum capillus-veneris (Maidenhair fern).